Consider the following 360-residue polypeptide: MINLFLFCRAGYEKDCAAEIQVRAAELDIGGFVKTNTNDAYVIFQCFQAGDAEVLAKNISLDSLIFARQMFAAKELLKGLPEQDRISPIVEALAQVHKAGELRVETPDTNEAKELSNFCRKFTVPLRQALKKSGALLEKENPKRPIIHVCFVASGQAYVGFSLSNNSSPYFMGIPRLKIAADAPSRSTLKLDEAFIHFIPKEEQETRLSSGMKAVDLGACPGGWTYQLVRRGMFVAAVDNGPMDQGLMDTGQVKHYQADGFRFEPPRKNITWLVCDMIEKPSRVAELIEAWAINGWFKESIFNLKLPMKARYKEVSTILATMEEILKENGVDDFSIAAKHLYHDRDEVTVHLCLRPSQPW.

Residues S187, 220-223 (CPGG), D239, D259, and D276 each bind S-adenosyl-L-methionine. Catalysis depends on K305, which acts as the Proton acceptor.

The protein belongs to the class I-like SAM-binding methyltransferase superfamily. RNA methyltransferase RlmE family. RlmM subfamily. As to quaternary structure, monomer.

Its subcellular location is the cytoplasm. It carries out the reaction cytidine(2498) in 23S rRNA + S-adenosyl-L-methionine = 2'-O-methylcytidine(2498) in 23S rRNA + S-adenosyl-L-homocysteine + H(+). Its function is as follows. Catalyzes the 2'-O-methylation at nucleotide C2498 in 23S rRNA. This is Ribosomal RNA large subunit methyltransferase M from Shewanella halifaxensis (strain HAW-EB4).